Consider the following 178-residue polypeptide: Ribosome maturation factor RimP (178 aa).

Belongs to the RimP family.

The protein resides in the cytoplasm. Required for maturation of 30S ribosomal subunits. The polypeptide is Ribosome maturation factor RimP (Caulobacter vibrioides (strain ATCC 19089 / CIP 103742 / CB 15) (Caulobacter crescentus)).